Consider the following 647-residue polypeptide: MEVAAGGGCGAGPPLLLSDSEQQCYSELFARCAGAASGGPGPGPPEATRVAPGTATAAAGPVADLFRASQLPPETLHQITELCGAKRVGYFGPTQFYVALKLIAAAQAGLPVRTESIKCELPLPRFVMSKNDGEIRFGNPAELHGPKVQIPYLTTEKNSFKRMDNEDKQETQSPTMSPLASPPSSPPHYQRVSLSHGYSKLRSGTEQMHPAPYERQPIGQPEGPSSEGPGAKPFRRQASLIRSFSVEREPQENNSNYPDEPWRITEEQREYYVNQFRSLQPDPSSFISGSVAKNFFTKSKLSIPELSYIWELSDADCDGALTLSEFCAAFHLIVARKNGYPLPEGLPPTLQPEYLQAAFPKSKWECAIFDSYSESMPANQQSCDLNRMEKTSVKDVADFPVPTQDVTTADDKQALKSTVNESLPKDVSEDTATSKDYNSLKARPRSRSYSSTSIEEAMKRGEDPPTPPPRPQKTHSRASSLDLNKVFLPSAPAANSGLLPPPPALPPRPCPTQSEPVSEADLHSQLNRAPSQAAESSPTKMDAPHAQPPSKPIRRKFRPENQTTESQEPAAAVGGAVSAAMVKPHPTVQKQSSKQKKAIQTAIRKNKEANAVLARLNSELQQQLKEVHQERIALENQLEQLRPVTVL.

In terms of domain architecture, EH 1 spans 21–122; it reads EQQCYSELFA…RTESIKCELP (102 aa). Positions 156–233 are disordered; sequence EKNSFKRMDN…PSSEGPGAKP (78 aa). The span at 158 to 170 shows a compositional bias: basic and acidic residues; it reads NSFKRMDNEDKQE. The span at 221–230 shows a compositional bias: low complexity; sequence PEGPSSEGPG. Ser239 bears the Phosphoserine mark. Positions 268–359 constitute an EH 2 domain; it reads QREYYVNQFR…LQPEYLQAAF (92 aa). Positions 301 to 336 constitute an EF-hand domain; sequence LSIPELSYIWELSDADCDGALTLSEFCAAFHLIVAR. Ca(2+)-binding residues include Asp314, Asp316, Asp318, and Glu325. Residues 402–478 are disordered; the sequence is PTQDVTTADD…PRPQKTHSRA (77 aa). The residue at position 466 (Thr466) is a Phosphothreonine. Ser480 is modified (phosphoserine). A disordered region spans residues 492-568; it reads PAANSGLLPP…PENQTTESQE (77 aa). Residues 499 to 510 are compositionally biased toward pro residues; the sequence is LPPPPALPPRPC. Positions 501–647 are interaction with RALBP1; that stretch reads PPPALPPRPC…LEQLRPVTVL (147 aa). Positions 524–539 are enriched in polar residues; that stretch reads SQLNRAPSQAAESSPT. The segment at 548–647 is interaction with ASAP1; the sequence is PPSKPIRRKF…LEQLRPVTVL (100 aa). A coiled-coil region spans residues 599–640; sequence IQTAIRKNKEANAVLARLNSELQQQLKEVHQERIALENQLEQ.

In terms of assembly, interacts with EPN1. Interacts with EPS15 AND EPS15L1. Interacts with RALBP1; can form a ternary complex with activated Ral (RALA or RALB). Interacts with ASAP1; the interaction is direct and this complex can bind paxillin. Also forms a ternary complex with RALBP1 and ASAP1. Interacts with GRB2. In terms of processing, tyrosine-phosphorylated upon stimulation of cells with EGF. Phosphorylation on Tyr-residues induces its association with the EGF receptor probably indirectly through an adapter like GRB2.

The protein localises to the cytoplasm. Functionally, involved in ligand-dependent receptor mediated endocytosis of the EGF and insulin receptors as part of the Ral signaling pathway. By controlling growth factor receptors endocytosis may regulate cell survival. Through ASAP1 may regulate cell adhesion and migration. This is RalBP1-associated Eps domain-containing protein 2 (Reps2) from Mus musculus (Mouse).